A 130-amino-acid chain; its full sequence is Protein ApaG (130 aa).

One can recognise an ApaG domain in the interval 3–127 (KAETRGIMVT…FSLDSPHLRR (125 aa)).

The sequence is that of Protein ApaG from Methylorubrum extorquens (strain CM4 / NCIMB 13688) (Methylobacterium extorquens).